The primary structure comprises 461 residues: Probable lipid II flippase MurJ (461 aa).

The next 12 helical transmembrane spans lie at 5 to 25, 51 to 71, 96 to 116, 123 to 143, 156 to 176, 229 to 249, 258 to 278, 293 to 313, 337 to 357, 372 to 392, 402 to 422, and 429 to 449; these read ILGA…PNLF, FASL…LLVA, IVAI…LGAL, FFAS…ALLI, LSYG…YPLV, IASF…VSYL, LPLA…IAIA, KAWF…IMLS, VFSL…FSLW, LISL…LGVL, GLFL…LGII, and LVIL…KSWV.

Belongs to the MurJ/MviN family.

It is found in the cell inner membrane. The protein operates within cell wall biogenesis; peptidoglycan biosynthesis. Involved in peptidoglycan biosynthesis. Transports lipid-linked peptidoglycan precursors from the inner to the outer leaflet of the cytoplasmic membrane. The protein is Probable lipid II flippase MurJ of Helicobacter pylori (strain ATCC 700392 / 26695) (Campylobacter pylori).